Here is a 221-residue protein sequence, read N- to C-terminus: Protein RER1D (221 aa).

4 helical membrane-spanning segments follow: residues 41-58 (IVRR…YIYR), 64-84 (GYFV…IGFL), 128-148 (FVVA…FWPI), and 149-169 (LLCY…VHMF). The disordered stretch occupies residues 200 to 221 (KGDGGDDRPSSSNSSQGNEKQD). The span at 209-221 (SSSNSSQGNEKQD) shows a compositional bias: polar residues.

The protein belongs to the RER1 family.

It localises to the membrane. Functionally, involved in the retrieval of endoplasmic reticulum membrane proteins from the early Golgi compartment. This Arabidopsis thaliana (Mouse-ear cress) protein is Protein RER1D.